The chain runs to 524 residues: Nickel-binding periplasmic protein (524 aa).

The N-terminal stretch at methionine 1–alanine 22 is a signal peptide.

Belongs to the bacterial solute-binding protein 5 family.

The protein resides in the periplasm. Functionally, involved in a nickel transport system, probably represents the nickel binder. In Escherichia coli (strain K12), this protein is Nickel-binding periplasmic protein (nikA).